Reading from the N-terminus, the 343-residue chain is Flavone 3'-O-methyltransferase OMT2 (343 aa).

N107 contacts (E)-ferulate. G184, D207, D227, M228, M240, and K241 together coordinate S-adenosyl-L-homocysteine. H245 acts as the Proton acceptor in catalysis. Residue D246 participates in (E)-5-hydroxyferulate binding. Catalysis depends on residues E273 and E305.

Belongs to the class I-like SAM-binding methyltransferase superfamily. Cation-independent O-methyltransferase family. COMT subfamily. In terms of assembly, homodimer.

The enzyme catalyses (E)-5-hydroxyferulate + S-adenosyl-L-methionine = (E)-sinapate + S-adenosyl-L-homocysteine + H(+). It carries out the reaction luteolin + S-adenosyl-L-methionine = chrysoeriol + S-adenosyl-L-homocysteine + H(+). The catalysed reaction is quercetin + S-adenosyl-L-methionine = isorhamnetin + S-adenosyl-L-homocysteine + H(+). It catalyses the reaction (E)-caffeate + S-adenosyl-L-methionine = (E)-ferulate + S-adenosyl-L-homocysteine + H(+). The enzyme catalyses a 3'-hydroxyflavone + S-adenosyl-L-methionine = a 3'-methoxyflavone + S-adenosyl-L-homocysteine + H(+). The protein operates within flavonoid metabolism. Its function is as follows. Catalyzes the 3'-O-methylation of the flavonoids luteolin and quercetin. Catalyzes the 3- of 5-O-methylation of the phenylpropanoids caffeate and 5-hydroxyferulate. Substrate preference is 5-hydroxyferulate &gt; luteolin &gt; quercetin &gt; caffeate. Apigenin, kempferol and 3,4-dimethylquercetin do not seem to be substrates for methylation. The chain is Flavone 3'-O-methyltransferase OMT2 from Chrysosplenium americanum (American golden saxifrage).